Consider the following 543-residue polypeptide: MAKQVKFSEDAPRSMLRGVETLPNAVKVTLGPKGRNVVLEKKFGSPLITNDGVTIPKEIELEDAYENMGAQLVKEVATKTNGIAGDGTTTATVLAAAMIREGLKNVAAGANPMVIRRGMEKAVGAAVEEIKSIAKPVENKSSIAQVAAISADDQEVGNLIAEAMEKVGKDGVITVEESKGFVTELEVVEGMQFDRGYASPYMITDTDKMEAVLNNPFILITDKKISNIQEVLPVLEQVVQSGKPLLIIAEDVEGEALATLVVNKLRGTFTAVAVKAPGFGDRRKAMLQDIAALTGGEVITEELGLDLKSTKLEQLGRAGKIVVTKENTTVVEGAGDKANIESRVAQIRQQIEDTTSDFDREKLQERLAKLAGGVAVIKVGAATETELKEKKLRIEDALNSTRAAVEEGIVPGGGTTLINAIKAVEGVKVEGEEAVGVHIVLRSLEEPVRQIAANAGLEGSVIVERLKKEPVGIGFNAATEEYVNMLEAGIVDAAKVTRSALSNAASVAAMFLTTEAVIADKPEENKAPMGMPDMGGMGGMGMM.

ATP is bound by residues 29 to 32 (TLGP), 86 to 90 (DGTTT), G413, 476 to 478 (NAA), and D492.

The protein belongs to the chaperonin (HSP60) family. As to quaternary structure, forms a cylinder of 14 subunits composed of two heptameric rings stacked back-to-back. Interacts with the co-chaperonin GroES.

The protein localises to the cytoplasm. The enzyme catalyses ATP + H2O + a folded polypeptide = ADP + phosphate + an unfolded polypeptide.. Its function is as follows. Together with its co-chaperonin GroES, plays an essential role in assisting protein folding. The GroEL-GroES system forms a nano-cage that allows encapsulation of the non-native substrate proteins and provides a physical environment optimized to promote and accelerate protein folding. The chain is Chaperonin GroEL from Brevibacillus choshinensis.